A 428-amino-acid polypeptide reads, in one-letter code: GTPase Obg (428 aa).

Positions 1–158 constitute an Obg domain; sequence MFVDQVQVEV…RFIKLELKVL (158 aa). Positions 159–333 constitute an OBG-type G domain; the sequence is ADVGLVGFPS…LMHKTAEVLK (175 aa). GTP is bound by residues 165–172, 190–194, 212–215, 282–285, and 314–316; these read GFPSVGKS, FTTLV, DLPG, TKMD, and SSL. Mg(2+) contacts are provided by serine 172 and threonine 192. The region spanning 350 to 428 is the OCT domain; sequence YKYQPEPALK…IDDFTFEFVE (79 aa).

The protein belongs to the TRAFAC class OBG-HflX-like GTPase superfamily. OBG GTPase family. As to quaternary structure, monomer. Mg(2+) serves as cofactor.

It localises to the cytoplasm. Its function is as follows. An essential GTPase which binds GTP, GDP and possibly (p)ppGpp with moderate affinity, with high nucleotide exchange rates and a fairly low GTP hydrolysis rate. Plays a role in control of the cell cycle, stress response, ribosome biogenesis and in those bacteria that undergo differentiation, in morphogenesis control. This Lacticaseibacillus paracasei (strain ATCC 334 / BCRC 17002 / CCUG 31169 / CIP 107868 / KCTC 3260 / NRRL B-441) (Lactobacillus paracasei) protein is GTPase Obg.